Reading from the N-terminus, the 478-residue chain is Trigger factor (478 aa).

Residues 154–167 (MAKDSRSFEPREEG) are compositionally biased toward basic and acidic residues. Disordered regions lie at residues 154–173 (MAKD…AQSG) and 444–478 (LFAE…KAAG). A PPIase FKBP-type domain is found at 173–258 (GDRVTIDFVG…VKAVAAPGET (86 aa)).

The protein belongs to the FKBP-type PPIase family. Tig subfamily.

It localises to the cytoplasm. The enzyme catalyses [protein]-peptidylproline (omega=180) = [protein]-peptidylproline (omega=0). Its function is as follows. Involved in protein export. Acts as a chaperone by maintaining the newly synthesized protein in an open conformation. Functions as a peptidyl-prolyl cis-trans isomerase. The protein is Trigger factor of Methylorubrum populi (strain ATCC BAA-705 / NCIMB 13946 / BJ001) (Methylobacterium populi).